Consider the following 132-residue polypeptide: UPF0102 protein Acid_2433 (132 aa).

The protein belongs to the UPF0102 family.

The polypeptide is UPF0102 protein Acid_2433 (Solibacter usitatus (strain Ellin6076)).